Consider the following 202-residue polypeptide: MSALPPVYSFPPLYTRQPNSLTRRQQISTWIDIISQYCKTKKIWYMSVDGTVINDNELDSGSTDNDDSKKISKNLFNNEDIQRSVSQVFIDEIWSQMTKEGKCLPIDQSGRRSSNTTTTRYFILWKSLDSWASLILQWFEDSGKLNQVITLYELSEGDETVNWEFHRMPESLLYYCLKPLCDRNRATMLKDENDKVIAIKVV.

Belongs to the VPS25 family. As to quaternary structure, homodimer. Component of the endosomal sorting complex required for transport II (ESCRT-II), which consists of 2 copies of VPS25, 1 copy of SNF8, and 1 copy of VPS36. The ESCRT-II complex interacts directly with the VPS20 subunit of the ESCRT-III complex.

Its subcellular location is the cytoplasm. It is found in the endosome membrane. Component of the ESCRT-II complex (endosomal sorting complex required for transport II), which is required for multivesicular body (MVB) formation and sorting of endosomal cargo proteins into MVBs. The MVB pathway mediates delivery of transmembrane proteins into the lumen of the lysosome for degradation. The ESCRT-II complex is probably involved in the recruitment of the ESCRT-III complex. The polypeptide is Vacuolar protein-sorting-associated protein 25 (VPS25) (Saccharomyces cerevisiae (strain ATCC 204508 / S288c) (Baker's yeast)).